Here is a 277-residue protein sequence, read N- to C-terminus: Protein HEAT-INDUCED TAS1 TARGET 1 (277 aa).

This sequence belongs to the heat induced plant HTT protein family. Interacts with the heat shock proteins HSP70-14 and At2g33735/HSP40, and with NFYC2 in both cytoplasm and nucleus. As to expression, expressed ubiquitously, including in seedlings, leaves, stems, inflorescences and siliques.

The protein localises to the cytoplasm. Its subcellular location is the nucleus. Functionally, mediates both basal and acquired thermotolerance via HSFA1s-directed pathways (e.g. HSFA1A, HSFA1B, and HSFA1D). Triggers the expression of HSFA1A and HSFA1B. This is Protein HEAT-INDUCED TAS1 TARGET 1 from Arabidopsis thaliana (Mouse-ear cress).